Reading from the N-terminus, the 80-residue chain is Exodeoxyribonuclease 7 small subunit (80 aa).

Belongs to the XseB family. Heterooligomer composed of large and small subunits.

Its subcellular location is the cytoplasm. It carries out the reaction Exonucleolytic cleavage in either 5'- to 3'- or 3'- to 5'-direction to yield nucleoside 5'-phosphates.. Functionally, bidirectionally degrades single-stranded DNA into large acid-insoluble oligonucleotides, which are then degraded further into small acid-soluble oligonucleotides. In Cronobacter sakazakii (strain ATCC BAA-894) (Enterobacter sakazakii), this protein is Exodeoxyribonuclease 7 small subunit.